The sequence spans 974 residues: RING finger protein nhl-1 (974 aa).

Residues 1–29 are disordered; it reads MSSSPQNEAEAREKMRELMSRPPSSRPAD. Positions 9-19 are enriched in basic and acidic residues; the sequence is AEAREKMRELM. The RING-type zinc finger occupies 43-84; sequence CPICLDRYKQPKLLPCQHTFCYPCLESCADTLHRNLKCPECR. Disordered regions lie at residues 360-395 and 416-548; these read VKSD…IRYR and SLLT…DFPV. The segment covering 416 to 431 has biased composition (polar residues); that stretch reads SLLTTSVTADSSSRTS. Basic and acidic residues predominate over residues 437–446; that stretch reads RVTRSVEPTK. Residues 447 to 465 are compositionally biased toward polar residues; sequence SRPTSLIVPNTETPRTVSP. Over residues 488-501 the composition is skewed to pro residues; the sequence is APLPQLPIRKPPLP. Over residues 511-528 the composition is skewed to basic and acidic residues; that stretch reads LNEKVETIRRAHQQRQDA. Low complexity predominate over residues 529–538; it reads SRAASRAVSS. NHL repeat units follow at residues 699 to 742, 746 to 788, 792 to 835, 839 to 883, 887 to 930, and 934 to 974; these read RAVF…FDKD, VRQF…FGLE, LFSF…FDKN, IAKF…FDPH, LFSF…FDAQ, and VSSF…IQIF.

As to quaternary structure, interacts with ubc-13.

The polypeptide is RING finger protein nhl-1 (Caenorhabditis elegans).